The chain runs to 316 residues: EFTTLFLLFSVLLLSASAEQCGSQAGGALCASGLCCSKFGWCGNTNDYCGPGNCQSQCPGGSPGDLGGVISNSMFDQMLNHRNDNACQGKGNFYSYNAFISAAGSFPGFGTTGDITARKREIAAFFAQTSHETTGGWASAPDGPYAWGYCFLREQGSPGDYCTPSNQWPCAPGRKYFGRGPIQISHNYNYGPCGRAIGVDLLNNPDLVATDSIISFKSAIWFWMTPQSPKPSCHDVITGRWQPSGTDQAANRVPGFGVITNIINGGLECGHGSDSRVQDRIGFYRRYCGILGVSPGDNLDCGNQRSFGNGLLVDTV.

Positions 1-18 (EFTTLFLLFSVLLLSASA) are cleaved as a signal peptide. In terms of domain architecture, Chitin-binding type-1 spans 19 to 60 (EQCGSQAGGALCASGLCCSKFGWCGNTNDYCGPGNCQSQCPG). 7 disulfide bridges follow: cysteine 21–cysteine 36, cysteine 30–cysteine 42, cysteine 35–cysteine 49, cysteine 54–cysteine 58, cysteine 87–cysteine 150, cysteine 162–cysteine 170, and cysteine 269–cysteine 301. The active-site Proton donor is glutamate 132. Residues 310 to 316 (GLLVDTV) constitute a propeptide, removed in mature form, vacuolar targeting.

Belongs to the glycosyl hydrolase 19 family. Chitinase class I subfamily.

Its subcellular location is the vacuole. The catalysed reaction is Random endo-hydrolysis of N-acetyl-beta-D-glucosaminide (1-&gt;4)-beta-linkages in chitin and chitodextrins.. In terms of biological role, defense against chitin-containing fungal pathogens. This is Endochitinase 2 (CHTB2) from Solanum tuberosum (Potato).